Reading from the N-terminus, the 411-residue chain is Acetylornithine aminotransferase (411 aa).

Pyridoxal 5'-phosphate is bound by residues 107–108 and F141; that span reads GT. R144 is a N(2)-acetyl-L-ornithine binding site. Residue 227-230 participates in pyridoxal 5'-phosphate binding; the sequence is DEIQ. K256 carries the post-translational modification N6-(pyridoxal phosphate)lysine. T284 contributes to the N(2)-acetyl-L-ornithine binding site. T285 lines the pyridoxal 5'-phosphate pocket.

The protein belongs to the class-III pyridoxal-phosphate-dependent aminotransferase family. ArgD subfamily. Homodimer. The cofactor is pyridoxal 5'-phosphate.

The protein resides in the cytoplasm. The enzyme catalyses N(2)-acetyl-L-ornithine + 2-oxoglutarate = N-acetyl-L-glutamate 5-semialdehyde + L-glutamate. The protein operates within amino-acid biosynthesis; L-arginine biosynthesis; N(2)-acetyl-L-ornithine from L-glutamate: step 4/4. This is Acetylornithine aminotransferase from Xylella fastidiosa (strain Temecula1 / ATCC 700964).